A 630-amino-acid polypeptide reads, in one-letter code: Ankyrin repeat protein OPG025 (630 aa).

6 ANK repeats span residues Asp-36–Ile-69, Asn-70–Ser-100, Asn-103–Ser-134, Met-174–His-210, Lys-338–Asn-367, and His-408–Ile-437.

This sequence belongs to the orthopoxvirus OPG025 family. As to quaternary structure, interacts with components of host SCF complex CUL1 and SKP1 and components of the cullin deneddylation/COP9 signalosome complex subunits COPS7A and COPS7B.

Plays a role in the inhibition of host immune repsonse by counteracting the action of interferons on early events in the viral replication cycle. The polypeptide is Ankyrin repeat protein OPG025 (OPG025) (Monkeypox virus).